The chain runs to 59 residues: Lantipeptide Flvbeta.f (59 aa).

Residues 1–27 (MEKMNNIAGITPENELDEMFDDSVVGA) constitute a propeptide, cleaved by FlvT. Residues Thr-31 and Thr-32 each carry the 2,3-didehydrobutyrine; by FlvM2 modification. 2 consecutive cross-links (beta-methyllanthionine (Thr-Cys); by FlvM2) follow at residues 41–47 (TKNPQIC) and 53–56 (TVKC).

Post-translationally, contains DL-beta-methyllanthionine, when coepressed in E.coli with the flavecin synthetase FlvM2.

It localises to the secreted. Its function is as follows. Lanthionine-containing peptide that does probably not show antibacterial activity, since its analog [+7]Flvbeta.f does not show antibacterial activity against M.luteus. Also does not show antibiotic activity when tested with [Del2]Flvalpha.a, an analog of Flvalpha.a, which is encoded by the same operon than Flvbeta.f. The bactericidal activity of lantibiotics is based on depolarization of energized bacterial cytoplasmic membranes, initiated by the formation of aqueous transmembrane pores. This Ruminococcus flavefaciens protein is Lantipeptide Flvbeta.f.